Consider the following 185-residue polypeptide: Signal peptidase complex subunit 3 (185 aa).

Residues M1–T12 are Cytoplasmic-facing. The chain crosses the membrane as a helical; Signal-anchor for type II membrane protein span at residues F13–I34. At Q35 to K185 the chain is on the lumenal side. N148 carries N-linked (GlcNAc...) asparagine glycosylation.

This sequence belongs to the SPCS3 family. As to quaternary structure, component of the signal peptidase complex (SPC) composed of a catalytic subunit sec11 and three accessory subunits spc1, spc2 and spc3. The complex induces a local thinning of the ER membrane which is used to measure the length of the signal peptide (SP) h-region of protein substrates. This ensures the selectivity of the complex towards h-regions shorter than 18-20 amino acids. SPC associates with the translocon complex.

It is found in the endoplasmic reticulum membrane. Essential component of the signal peptidase complex (SPC) which catalyzes the cleavage of N-terminal signal sequences from nascent proteins as they are translocated into the lumen of the endoplasmic reticulum. Essential for the SPC catalytic activity, possibly by stabilizing and positioning the active center of the complex close to the lumenal surface. Essential for viability. This chain is Signal peptidase complex subunit 3 (spc3), found in Schizosaccharomyces pombe (strain 972 / ATCC 24843) (Fission yeast).